The following is a 432-amino-acid chain: Keratin, type I cytoskeletal 17 (432 aa).

Residues 1–24 (MTTTIRQFTSSSSIKGSSGLGGGS) form a disordered region. Positions 1–83 (MTTTIRQFTS…GGVDGLLAGG (83 aa)) are head. Phosphoserine is present on residues Ser-12 and Ser-13. Lys-15 is covalently cross-linked (Glycyl lysine isopeptide (Lys-Gly) (interchain with G-Cter in SUMO1); alternate). Lys-15 is covalently cross-linked (Glycyl lysine isopeptide (Lys-Gly) (interchain with G-Cter in SUMO2); alternate). Residues Ser-25, Ser-32, and Ser-39 each carry the phosphoserine modification. Phosphoserine; by RPS6KA1 is present on Ser-44. The interval 84–120 (EKATMQNLNDRLASYLDKVRALEEANTELEVKIRDWY) is coil 1A. Residues 84-395 (EKATMQNLND…RLLEGEDAHL (312 aa)) enclose the IF rod domain. At Thr-110 the chain carries Phosphothreonine. Residues 121-138 (QRQAPGPARDYSQYYRTI) form a linker 1 region. Residues 139-230 (EELQNKILTA…NHEEEMNALR (92 aa)) form a coil 1B region. Positions 231–250 (GQVGGEINVEMDAAPGVDLS) are linker 12. The interval 251–392 (RILNEMRDQY…TYRRLLEGED (142 aa)) is coil 2. Lys-278 is covalently cross-linked (Glycyl lysine isopeptide (Lys-Gly) (interchain with G-Cter in SUMO2)). The residue at position 279 (Thr-279) is a Phosphothreonine. The residue at position 323 (Ser-323) is a Phosphoserine. The tail stretch occupies residues 393 to 432 (AHLTQYKKEPVTTRQVRTIVEEVQDGKVISSREQVHQTTR). Residues Lys-399, Lys-400, and Lys-419 each participate in a glycyl lysine isopeptide (Lys-Gly) (interchain with G-Cter in SUMO1); alternate cross-link. Residues Lys-399, Lys-400, and Lys-419 each participate in a glycyl lysine isopeptide (Lys-Gly) (interchain with G-Cter in SUMO2); alternate cross-link.

The protein belongs to the intermediate filament family. Heterodimer of a type I and a type II keratin. KRT17 associates with KRT6 isomers (KRT6A or KRT6B). Interacts with TRADD and SFN. Post-translationally, phosphorylation at Ser-44 occurs in a growth- and stress-dependent fashion in skin keratinocytes, it has no effect on filament organization.

It localises to the cytoplasm. In terms of biological role, type I keratin involved in the formation and maintenance of various skin appendages, specifically in determining shape and orientation of hair. Required for the correct growth of hair follicles, in particular for the persistence of the anagen (growth) state. Modulates the function of TNF-alpha in the specific context of hair cycling. Regulates protein synthesis and epithelial cell growth through binding to the adapter protein SFN and by stimulating Akt/mTOR pathway. Involved in tissue repair. May be a marker of basal cell differentiation in complex epithelia and therefore indicative of a certain type of epithelial 'stem cells'. Acts as a promoter of epithelial proliferation by acting a regulator of immune response in skin: promotes Th1/Th17-dominated immune environment contributing to the development of basaloid skin tumors. May act as an autoantigen in the immunopathogenesis of psoriasis, with certain peptide regions being a major target for autoreactive T-cells and hence causing their proliferation. The sequence is that of Keratin, type I cytoskeletal 17 from Pan troglodytes (Chimpanzee).